The chain runs to 690 residues: DNA-directed RNA polymerase subunit beta' (690 aa).

Zn(2+) is bound by residues Cys76, Cys78, Cys94, and Cys97. The Mg(2+) site is built by Asp496, Asp498, and Asp500.

It belongs to the RNA polymerase beta' chain family. RpoC1 subfamily. In terms of assembly, in plastids the minimal PEP RNA polymerase catalytic core is composed of four subunits: alpha, beta, beta', and beta''. When a (nuclear-encoded) sigma factor is associated with the core the holoenzyme is formed, which can initiate transcription. Mg(2+) is required as a cofactor. The cofactor is Zn(2+).

It localises to the plastid. It is found in the chloroplast. The catalysed reaction is RNA(n) + a ribonucleoside 5'-triphosphate = RNA(n+1) + diphosphate. Functionally, DNA-dependent RNA polymerase catalyzes the transcription of DNA into RNA using the four ribonucleoside triphosphates as substrates. The protein is DNA-directed RNA polymerase subunit beta' of Lemna minor (Common duckweed).